Reading from the N-terminus, the 280-residue chain is Fructose-1,6-bisphosphatase class 1 (280 aa).

Mg(2+) is bound by residues E64, D83, L85, and D86. Substrate is bound by residues 86-89, Y189, and K220; that span reads DGSS. Residue E226 participates in Mg(2+) binding.

It belongs to the FBPase class 1 family. In terms of assembly, homotetramer. The cofactor is Mg(2+).

It localises to the cytoplasm. The catalysed reaction is beta-D-fructose 1,6-bisphosphate + H2O = beta-D-fructose 6-phosphate + phosphate. The protein operates within carbohydrate biosynthesis; gluconeogenesis. This Campylobacter jejuni subsp. jejuni serotype O:6 (strain 81116 / NCTC 11828) protein is Fructose-1,6-bisphosphatase class 1.